Here is a 309-residue protein sequence, read N- to C-terminus: Aurora kinase C (309 aa).

The tract at residues 1-33 is disordered; that stretch reads MSSPRAVVQLGKAQPAGEELATANQTAQQPSSP. The segment covering 22–32 has biased composition (polar residues); that stretch reads TANQTAQQPSS. A Protein kinase domain is found at 43-293; sequence FEIGRPLGKG…LAQILKHPWV (251 aa). Residues 49–57 and lysine 72 each bind ATP; that span reads LGKGKFGNV. Aspartate 166 functions as the Proton acceptor in the catalytic mechanism. Position 198 is a phosphothreonine; by PKA (threonine 198). The interaction with BIRC5 stretch occupies residues 292 to 309; the sequence is WVQAHSRRVLPPCAQMAS.

It belongs to the protein kinase superfamily. Ser/Thr protein kinase family. Aurora subfamily. As to quaternary structure, component of the chromosomal passenger complex (CPC) composed of at least BIRC5/survivin, CDCA8/borealin, INCENP, AURKB or AURKC; predominantly independent AURKB- and AURKC-containing complexes exist; in the complex interacts directly with BIRC5/survivin and INCENP. Interacts with TACC1. In terms of tissue distribution, isoform 1 and isoform 2 are expressed in testis. Elevated expression levels were seen only in a subset of cancer cell lines such as Hep-G2, Huh-7 and HeLa. Expression is maximum at M phase.

The protein localises to the nucleus. The protein resides in the chromosome. Its subcellular location is the centromere. It localises to the cytoplasm. It is found in the cytoskeleton. The protein localises to the spindle. The catalysed reaction is L-seryl-[protein] + ATP = O-phospho-L-seryl-[protein] + ADP + H(+). It carries out the reaction L-threonyl-[protein] + ATP = O-phospho-L-threonyl-[protein] + ADP + H(+). With respect to regulation, okadaic acid, an inhibitor of protein phosphatase 1 (PP1), protein phosphatase 2A (PP2A) and protein phosphatase 5 (PP5), increases AURKC activity. AURKC is also stabilized through its interaction with INCENP, which also acts as an activator. In terms of biological role, serine/threonine-protein kinase component of the chromosomal passenger complex (CPC), a complex that acts as a key regulator of mitosis. The CPC complex has essential functions at the centromere in ensuring correct chromosome alignment and segregation and is required for chromatin-induced microtubule stabilization and spindle assembly. Also plays a role in meiosis and more particularly in spermatogenesis. Has redundant cellular functions with AURKB and can rescue an AURKB knockdown. Like AURKB, AURKC phosphorylates histone H3 at 'Ser-10' and 'Ser-28'. AURKC phosphorylates the CPC complex subunits BIRC5/survivin and INCENP leading to increased AURKC activity. Phosphorylates TACC1, another protein involved in cell division, at 'Ser-228'. This chain is Aurora kinase C (AURKC), found in Homo sapiens (Human).